A 136-amino-acid chain; its full sequence is Small ribosomal subunit protein uS19 (136 aa).

Belongs to the universal ribosomal protein uS19 family.

Functionally, protein S19 forms a complex with S13 that binds strongly to the 16S ribosomal RNA. This is Small ribosomal subunit protein uS19 from Methanocorpusculum labreanum (strain ATCC 43576 / DSM 4855 / Z).